The sequence spans 149 residues: Calmodulin-1 (149 aa).

EF-hand domains are found at residues 8 to 43, 44 to 79, 81 to 116, and 117 to 149; these read EQIS…LGQN, PTEA…KMKD, DSEE…LGEK, and LTDE…MMAK. Ca(2+) contacts are provided by D21, D23, D25, C27, E32, D57, D59, N61, T63, E68, D94, D96, N98, E105, D130, D132, D134, Q136, and E141.

This sequence belongs to the calmodulin family. In terms of assembly, interacts with ZAR1 (via CaMBD domain). Binds to IQD1. Binds to MEE62 in a calcium-dependent manner.

Its subcellular location is the cytoplasm. The protein localises to the cell membrane. In terms of biological role, calmodulin mediates the control of a large number of enzymes, ion channels and other proteins by Ca(2+). Among the enzymes to be stimulated by the calmodulin-Ca(2+) complex are a number of protein kinases and phosphatases. The polypeptide is Calmodulin-1 (CAM1) (Arabidopsis thaliana (Mouse-ear cress)).